The primary structure comprises 293 residues: Ribosomal RNA small subunit methyltransferase H (293 aa).

S-adenosyl-L-methionine is bound by residues glycine 34–histidine 36, aspartate 54, leucine 86, aspartate 101, and glutamine 108.

Belongs to the methyltransferase superfamily. RsmH family.

It localises to the cytoplasm. It carries out the reaction cytidine(1402) in 16S rRNA + S-adenosyl-L-methionine = N(4)-methylcytidine(1402) in 16S rRNA + S-adenosyl-L-homocysteine + H(+). Specifically methylates the N4 position of cytidine in position 1402 (C1402) of 16S rRNA. This chain is Ribosomal RNA small subunit methyltransferase H, found in Elusimicrobium minutum (strain Pei191).